We begin with the raw amino-acid sequence, 171 residues long: Shikimate kinase (171 aa).

Gly14–Thr19 is a binding site for ATP. Ser18 is a Mg(2+) binding site. The substrate site is built by Asp36, Arg60, and Gly82. Arg120 is a binding site for ATP. Arg139 is a substrate binding site. Gln156 is an ATP binding site.

This sequence belongs to the shikimate kinase family. Monomer. Mg(2+) is required as a cofactor.

The protein resides in the cytoplasm. It catalyses the reaction shikimate + ATP = 3-phosphoshikimate + ADP + H(+). It functions in the pathway metabolic intermediate biosynthesis; chorismate biosynthesis; chorismate from D-erythrose 4-phosphate and phosphoenolpyruvate: step 5/7. Functionally, catalyzes the specific phosphorylation of the 3-hydroxyl group of shikimic acid using ATP as a cosubstrate. The chain is Shikimate kinase from Shewanella denitrificans (strain OS217 / ATCC BAA-1090 / DSM 15013).